A 129-amino-acid polypeptide reads, in one-letter code: Small ribosomal subunit protein uS12 (129 aa).

3-methylthioaspartic acid is present on Asp89. The tract at residues 101-129 is disordered; sequence SLDTSGVADRKQSRSKYGAKQPKAGAAKK. Over residues 116–129 the composition is skewed to low complexity; it reads KYGAKQPKAGAAKK.

The protein belongs to the universal ribosomal protein uS12 family. In terms of assembly, part of the 30S ribosomal subunit. Contacts proteins S8 and S17. May interact with IF1 in the 30S initiation complex.

In terms of biological role, with S4 and S5 plays an important role in translational accuracy. Functionally, interacts with and stabilizes bases of the 16S rRNA that are involved in tRNA selection in the A site and with the mRNA backbone. Located at the interface of the 30S and 50S subunits, it traverses the body of the 30S subunit contacting proteins on the other side and probably holding the rRNA structure together. The combined cluster of proteins S8, S12 and S17 appears to hold together the shoulder and platform of the 30S subunit. In Chlorobaculum parvum (strain DSM 263 / NCIMB 8327) (Chlorobium vibrioforme subsp. thiosulfatophilum), this protein is Small ribosomal subunit protein uS12.